A 913-amino-acid chain; its full sequence is Probable TonB-dependent receptor HI_1217 (913 aa).

The N-terminal stretch at 1 to 27 (MKKAIKLNLITLGLINTIGMTITQAQA) is a signal peptide. Residues 42–165 (SNDKKPFTEA…LAGSANFRTL (124 aa)) enclose the TBDR plug domain. The TBDR beta-barrel domain maps to 176 to 913 (PFGIILKGMT…TYILSLNYKF (738 aa)). A TonB C-terminal box motif is present at residues 896-913 (LYNFARGRTYILSLNYKF).

Belongs to the TonB-dependent receptor family.

Its subcellular location is the cell outer membrane. Functionally, probable receptor, TonB-dependent. In Haemophilus influenzae (strain ATCC 51907 / DSM 11121 / KW20 / Rd), this protein is Probable TonB-dependent receptor HI_1217.